Reading from the N-terminus, the 117-residue chain is V-type proton ATPase subunit G (117 aa).

This sequence belongs to the V-ATPase G subunit family. As to quaternary structure, V-ATPase is a heteromultimeric enzyme made up of two complexes: the ATP-hydrolytic V1 complex and the proton translocation V0 complex. The V1 complex consists of three catalytic AB heterodimers that form a heterohexamer, three peripheral stalks each consisting of EG heterodimers, one central rotor including subunits D and F, and the regulatory subunits C and H. The proton translocation complex V0 consists of the proton transport subunit a, a ring of proteolipid subunits c9c'', rotary subunit d, subunits e and f, and the accessory subunits VhaAC45 and ATP6AP2.

Its function is as follows. Subunit of the V1 complex of vacuolar(H+)-ATPase (V-ATPase), a multisubunit enzyme composed of a peripheral complex (V1) that hydrolyzes ATP and a membrane integral complex (V0) that translocates protons. V-ATPase is responsible for acidifying and maintaining the pH of intracellular compartments and in some cell types, is targeted to the plasma membrane, where it is responsible for acidifying the extracellular environment. In enterocytes, acts as part of a pHCl-2 sensory pathway which mediates Tor-dependent larval growth and metabolism in response to zinc availability. Likely acts in maintaining enterocyte lysosomal acidification which consequently promotes Tor activation at the lysosome membrane. The chain is V-type proton ATPase subunit G (Vha13) from Drosophila melanogaster (Fruit fly).